We begin with the raw amino-acid sequence, 808 residues long: Disks large-associated protein 5 (808 aa).

Residues serine 66 and serine 70 each carry the phosphoserine modification. Residues 88–119 adopt a coiled-coil conformation; that stretch reads QRKQLLQKYKEEKQLQKLKEQREKAKRGVFKV. The disordered stretch occupies residues 134–282; the sequence is QRGAKAEPEK…QTRETSEMGP (149 aa). Composition is skewed to basic and acidic residues over residues 135–145 and 180–193; these read RGAKAEPEKAF and QTSEKQPLDRERKV. Serine 201 is modified (phosphoserine). Basic and acidic residues-rich tracts occupy residues 232 to 241 and 249 to 278; these read TNEKGSERMR and KKPEGKPDKVIPSKVERDEKHLDSQTRETS. At serine 328 the chain carries Phosphoserine. A phosphothreonine mark is found at threonine 337 and threonine 386. The tract at residues 377-413 is disordered; that stretch reads HVLNQKGASTSDSNHASVKGVPCSEGSEGQTSQPPHD. Positions 382–392 are enriched in polar residues; sequence KGASTSDSNHA. Serine 598 is subject to Phosphoserine. The residue at position 607 (serine 607) is a Phosphoserine; by AURKA. Serine 612 is modified (phosphoserine). Phosphothreonine is present on threonine 617. Serine 620 is modified (phosphoserine). The disordered stretch occupies residues 629–654; sequence RAAGDLLRQKMPLKKPDPQSSKSEHV. Residues 642–654 show a composition bias toward basic and acidic residues; that stretch reads KKPDPQSSKSEHV. Position 728 is a phosphothreonine (threonine 728). The disordered stretch occupies residues 735–757; that stretch reads SNPETNTSSQSNTSQEEAEASQS. Serine 743 is subject to Phosphoserine. Phosphoserine; by AURKA is present on serine 797. Serine 806 bears the Phosphoserine mark.

The protein belongs to the SAPAP family. As to quaternary structure, interacts with CDC2. Interacts with the C-terminal proline-rich region of FBXO7. Recruited by FBXO7 to a SCF (SKP1-CUL1-F-box) protein complex in a CDC2/Cyclin B-phosphorylation dependent manner. Interacts with CDH1. Post-translationally, ubiquitinated, leading to its degradation. In terms of processing, decreased phosphorylation levels are associated with the differentiation of intestinal epithelial cells. As to expression, expressed at low levels in normal resting liver. Up-regulated in regenerating liver after partial hepatectomy.

It is found in the nucleus. The protein resides in the cytoplasm. Its subcellular location is the cytoskeleton. The protein localises to the spindle. In terms of biological role, potential cell cycle regulator that may play a role in carcinogenesis of cancer cells. Mitotic phosphoprotein regulated by the ubiquitin-proteasome pathway. Key regulator of adherens junction integrity and differentiation that may be involved in CDH1-mediated adhesion and signaling in epithelial cells. The sequence is that of Disks large-associated protein 5 (Dlgap5) from Mus musculus (Mouse).